Reading from the N-terminus, the 434-residue chain is Histidinol dehydrogenase (434 aa).

NAD(+)-binding residues include Tyr-130, Gln-188, and Asn-211. Ser-237, Gln-259, and His-262 together coordinate substrate. 2 residues coordinate Zn(2+): Gln-259 and His-262. Catalysis depends on proton acceptor residues Glu-326 and His-327. Substrate-binding residues include His-327, Asp-360, Glu-414, and His-419. A Zn(2+)-binding site is contributed by Asp-360. Residue His-419 coordinates Zn(2+).

The protein belongs to the histidinol dehydrogenase family. As to quaternary structure, homodimer. The cofactor is Zn(2+).

The catalysed reaction is L-histidinol + 2 NAD(+) + H2O = L-histidine + 2 NADH + 3 H(+). It functions in the pathway amino-acid biosynthesis; L-histidine biosynthesis; L-histidine from 5-phospho-alpha-D-ribose 1-diphosphate: step 9/9. Functionally, catalyzes the sequential NAD-dependent oxidations of L-histidinol to L-histidinaldehyde and then to L-histidine. This is Histidinol dehydrogenase from Salmonella typhi.